The chain runs to 237 residues: GATA zinc finger domain-containing protein 18 (237 aa).

2 stretches are compositionally biased toward low complexity: residues 1-28 and 87-118; these read MAHNNNNNINNNNNNNNNNNNNNNKNNN and NTSTNTTTTTTTTTTTTTTSSPNNNVITPNSN. Disordered stretches follow at residues 1–31, 78–119, and 140–186; these read MAHNNNNNINNNNNNNNNNNNNNNKNNNSEY, PTNT…NSNL, and FEEG…GGCS. Positions 140–151 are enriched in acidic residues; the sequence is FEEGDDEEETSS. Residues 152-167 show a composition bias toward low complexity; the sequence is DSDSSSSSSTSSSSSE. The GATA-type zinc-finger motif lies at 185-212; sequence CSICKTQETPYWRKGKDGDKTVYLCNAC.

The polypeptide is GATA zinc finger domain-containing protein 18 (gtaR) (Dictyostelium discoideum (Social amoeba)).